Here is a 629-residue protein sequence, read N- to C-terminus: tRNA uridine 5-carboxymethylaminomethyl modification enzyme MnmG (629 aa).

Residues glycine 15 to glycine 20, valine 127, and serine 182 contribute to the FAD site. The interval threonine 203 to proline 226 is disordered. The segment covering serine 215–proline 226 has biased composition (basic and acidic residues). Residue glycine 274 to phenylalanine 288 participates in NAD(+) binding. Glutamine 371 is a binding site for FAD.

It belongs to the MnmG family. Homodimer. Heterotetramer of two MnmE and two MnmG subunits. The cofactor is FAD.

It is found in the cytoplasm. In terms of biological role, NAD-binding protein involved in the addition of a carboxymethylaminomethyl (cmnm) group at the wobble position (U34) of certain tRNAs, forming tRNA-cmnm(5)s(2)U34. The polypeptide is tRNA uridine 5-carboxymethylaminomethyl modification enzyme MnmG (Listeria innocua serovar 6a (strain ATCC BAA-680 / CLIP 11262)).